The chain runs to 255 residues: Endonuclease V (255 aa).

Residues Asp-42 and Asp-110 each coordinate Mg(2+).

The protein belongs to the endonuclease V family. It depends on Mg(2+) as a cofactor.

The protein resides in the cytoplasm. It carries out the reaction Endonucleolytic cleavage at apurinic or apyrimidinic sites to products with a 5'-phosphate.. Its function is as follows. DNA repair enzyme involved in the repair of deaminated bases. Selectively cleaves double-stranded DNA at the second phosphodiester bond 3' to a deoxyinosine leaving behind the intact lesion on the nicked DNA. This Aeropyrum pernix (strain ATCC 700893 / DSM 11879 / JCM 9820 / NBRC 100138 / K1) protein is Endonuclease V.